Here is a 198-residue protein sequence, read N- to C-terminus: Zinc finger protein 41 homolog (198 aa).

Positions 1–12 are enriched in basic residues; it reads MEKPAGRKKKTP. A disordered region spans residues 1–55; it reads MEKPAGRKKKTPTPREEADVQKSALREEKVSGDRKPPERPTVPRKPRTEPCLSPE. The segment covering 13-38 has biased composition (basic and acidic residues); it reads TPREEADVQKSALREEKVSGDRKPPE. 4 C2H2-type zinc fingers span residues 87–109, 115–137, 143–165, and 171–193; these read YECSECGRIFKHKTDHIRHQRVH, FKCAQCGKAFRHSSDVTKHQRTH, FKCGECGKAFNCGSNLLKHQKTH, and YECTHCGKAFAYSSCLIRHQKRH.

Belongs to the krueppel C2H2-type zinc-finger protein family.

Its subcellular location is the nucleus. Functionally, a putative DNA-binding regulatory protein associated with meiosis in spermatogenesis. This Homo sapiens (Human) protein is Zinc finger protein 41 homolog (ZFP41).